Consider the following 476-residue polypeptide: Dermokine (476 aa).

Positions 1–21 (MKFQGPLACLLLALCLGSGEA) are cleaved as a signal peptide. Gly residues-rich tracts occupy residues 153–169 (SQGG…GGLG), 193–202 (WGQGGNGGPP), 236–259 (GSGG…GSGS), and 268–298 (SSGG…GSRG). The disordered stretch occupies residues 153 to 351 (SQGGLGGQGQ…ESGIQNSETS (199 aa)). A compositionally biased stretch (low complexity) spans 299 to 315 (DSGSESSWGSSTGSSSG). The span at 316 to 326 (NHGGSGGGNGH) shows a compositional bias: gly residues.

This sequence belongs to the dermokine family. As to quaternary structure, homooligomer. Seems to be able to homodimerize and homotrimerize. O-glycosylated. As to expression, expressed in epidermis; in the spinous and granular layers and in placenta. Also found in the epithelia of the small intestine, macrophages of the lung and endothelial cells of the lung. Isoform 15 is expressed in epidermis and placenta. Isoform 1 is expressed in epidermis.

The protein localises to the secreted. Functionally, may act as a soluble regulator of keratinocyte differentiation. The protein is Dermokine (DMKN) of Homo sapiens (Human).